A 285-amino-acid chain; its full sequence is Small ribosomal subunit protein uS5x (285 aa).

Residues 1-19 (MAERGGERGVERGGERGDF) show a composition bias toward basic and acidic residues. The tract at residues 1–51 (MAERGGERGVERGGERGDFGRGFGGRGGRGDRGGRGRGGRGGRRGGRASEE) is disordered. The span at 35 to 46 (RGRGGRGGRRGG) shows a compositional bias: basic residues. Residues 96-159 (LKDEVMKIMP…ILAKLSVVPV (64 aa)) form the S5 DRBM domain.

This sequence belongs to the universal ribosomal protein uS5 family. Interacts with MBD6.

In terms of biological role, component of the ribosome, a large ribonucleoprotein complex responsible for the synthesis of proteins in the cell. The small ribosomal subunit (SSU) binds messenger RNAs (mRNAs) and translates the encoded message by selecting cognate aminoacyl-transfer RNA (tRNA) molecules. The large subunit (LSU) contains the ribosomal catalytic site termed the peptidyl transferase center (PTC), which catalyzes the formation of peptide bonds, thereby polymerizing the amino acids delivered by tRNAs into a polypeptide chain. The nascent polypeptides leave the ribosome through a tunnel in the LSU and interact with protein factors that function in enzymatic processing, targeting, and the membrane insertion of nascent chains at the exit of the ribosomal tunnel. Plays a role in the assembly and function of the 40S ribosomal subunit. Mutations in this protein affects the control of translational fidelity. Involved in nucleolar processing of pre-18S ribosomal RNA and ribosome assembly. Also involved in RNA-directed DNA methylation (RdDM). The polypeptide is Small ribosomal subunit protein uS5x (Arabidopsis thaliana (Mouse-ear cress)).